Reading from the N-terminus, the 230-residue chain is Large ribosomal subunit protein uL3 (230 aa).

Disordered regions lie at residues 125 to 149 (QAIG…SLGD) and 210 to 230 (PNPK…VKNE).

The protein belongs to the universal ribosomal protein uL3 family. In terms of assembly, part of the 50S ribosomal subunit. Forms a cluster with proteins L14 and L19.

Functionally, one of the primary rRNA binding proteins, it binds directly near the 3'-end of the 23S rRNA, where it nucleates assembly of the 50S subunit. This Mesomycoplasma hyopneumoniae (strain 232) (Mycoplasma hyopneumoniae) protein is Large ribosomal subunit protein uL3.